Here is an 824-residue protein sequence, read N- to C-terminus: Dapper 1-B (824 aa).

Disordered regions lie at residues 1–33 (MKPIPAAPEPLGQHQDSPRRKDKGEAESERQRT), 131–150 (EEHLETDSRPSSGFYELSDG), and 515–534 (HASSSFDERPPLDFKSEGSS). Positions 2-343 (KPIPAAPEPL…PVRTNKPRTS (342 aa)) are interaction with tcf7l1-A. Residues 16-33 (DSPRRKDKGEAESERQRT) show a composition bias toward basic and acidic residues. Residues 84–139 (EEKFLEDNILLLKKQLNCLRKRDAGLLSQLHELDKQINDLRIDVEKTEEHLETDSR) are a coiled coil. Positions 520-530 (FDERPPLDFKS) are enriched in basic and acidic residues. The PDZ-binding motif lies at 821-824 (MTTV).

This sequence belongs to the dapper family. Interacts with dbf4 and tcf7l1-A. Interacts with dvl2/dsh; the interaction is required for dact1-b phosphorylation by CaMK1D and seems to become disrupted by the phosphorylation. In terms of processing, phosphorylated by CaMK1D; the phosphorylation requires binding to dvl2/dsh. Expressed both in the dorsal lip in early gastrula and throughout the posterior presumptive ectoderm in early neurula. Expressed in the dorsal neural folds at the tailbud stage and highly expressed in the tadpole head, including the brain, retina and cartilaginous branchial arch derivatives.

The protein resides in the cytoplasm. It is found in the nucleus. Functionally, involved in regulation of intracellular signaling pathways during development. Specifically thought to play a role in canonical and/or non-canonical Wnt signaling pathways through interaction with DSH (Dishevelled) family proteins. Binds to dvl2 to regulate the degradation of beta-catenin (ctnnb1-A and possibly ctnnb1-B), thereby modulating the transcriptional activation of target genes of the Wnt signaling pathway. Seems to promote beta-catenin degradation if not phosphorylated and to block beta-catenin degradation if phosphorylated by CaMK1D. Involved in regulation of catenin delta/ctnnd1 protein level. May also bind to and directly stimulate the activity of tcf7l1-A. Also regulates the activation by dvl2 of jnk, a component of ctnnb1/beta-catenin-independent frizzled signaling. Required for notochord and head formation. This chain is Dapper 1-B (dact1-b), found in Xenopus laevis (African clawed frog).